A 505-amino-acid chain; its full sequence is MTTIEDFTSQYGLVQKIDAFGYMKYLAENPDAPRKHGKVVLVTADTPLKASRGEGKTTTTIALIDALNKRGIDATAVLRQPSMGITAAGSKGGASGGGKASLTHPELIDWGLCGEMGAIEAAQNLLVSFAEKAIDDGKLDTILVPRVSEVPSRSLRSTAVDYGKGNVPEKVVLTPTCELMQIVVLSRSMDEISERVSKMIAGTKDGKAVTFGEFVDLWRITGILADAVKPAKTETVNGSPVYVHGGPFANVSIGIPTLVSVEMACALHDVVIVEAGYGTDAGAQKWLDIACREYGAQWPSAAIVVTRASTWRDDPELAWRYPFHVQRLENLDIPTFPLINLWEGEDDQVPSLKATADELGFRTPIIGNLFRDGGEALAPQLDGFVDALQNGSMPAEPHSHKGMALTENAKWVAENAYGVPAERVIYKPGFTESVSEAMELCQSAGISLDDLAFVAVKSPATMTDNDRAPEEERTVALKKVEVHAGAGLVHVNLTTSLTTPMPKIV.

Belongs to the formate--tetrahydrofolate ligase family.

The enzyme catalyses (6S)-5,6,7,8-tetrahydrofolate + formate + ATP = (6R)-10-formyltetrahydrofolate + ADP + phosphate. It functions in the pathway one-carbon metabolism; tetrahydrofolate interconversion. In Bifidobacterium longum (strain NCC 2705), this protein is Formate--tetrahydrofolate ligase (fhs).